Reading from the N-terminus, the 111-residue chain is MSKQNLEEIIQTGIADTELSTEISTAIKRPRKYKVLLLNDDYTPMDFVVEVLKHFFHLNEEVAIQVMLQVHFQGKGVCGVFTRDIAETKVALVNEYARMNQHPLLSSMEPE.

The protein belongs to the ClpS family. As to quaternary structure, binds to the N-terminal domain of the chaperone ClpA.

Involved in the modulation of the specificity of the ClpAP-mediated ATP-dependent protein degradation. The polypeptide is ATP-dependent Clp protease adapter protein ClpS (Legionella pneumophila (strain Paris)).